The chain runs to 142 residues: C-type lectin 13 (142 aa).

The first 23 residues, Met-1–Ala-23, serve as a signal peptide directing secretion. Cystine bridges form between Cys-25-Cys-36, Cys-53-Cys-138, and Cys-115-Cys-130. Residues Tyr-32 to Lys-139 enclose the C-type lectin domain.

Belongs to the snaclec family. In terms of assembly, heteromultimer; disulfide-linked. As to expression, expressed by the venom gland.

It localises to the secreted. Its function is as follows. Interferes with one step of hemostasis (modulation of platelet aggregation, or coagulation cascade, for example). This is C-type lectin 13 from Crotalus adamanteus (Eastern diamondback rattlesnake).